A 257-amino-acid polypeptide reads, in one-letter code: UPF0246 protein swp_3736 (257 aa).

Belongs to the UPF0246 family.

This chain is UPF0246 protein swp_3736, found in Shewanella piezotolerans (strain WP3 / JCM 13877).